Consider the following 900-residue polypeptide: Phosphoenolpyruvate carboxylase (900 aa).

Catalysis depends on residues H140 and K568.

Belongs to the PEPCase type 1 family. It depends on Mg(2+) as a cofactor.

The enzyme catalyses oxaloacetate + phosphate = phosphoenolpyruvate + hydrogencarbonate. Forms oxaloacetate, a four-carbon dicarboxylic acid source for the tricarboxylic acid cycle. The polypeptide is Phosphoenolpyruvate carboxylase (Neisseria meningitidis serogroup C / serotype 2a (strain ATCC 700532 / DSM 15464 / FAM18)).